A 510-amino-acid chain; its full sequence is Chromosomal replication initiator protein DnaA (510 aa).

Positions 1–107 (MTNDPGSGFA…VRIAPPPADD (107 aa)) are domain I, interacts with DnaA modulators. The interval 107–169 (DDDDSVAAAV…ADTSASADGT (63 aa)) is domain II. The segment at 119–168 (PGLEASPETSQEVSDEIDDFGENAPKSRQSWPTHFKKRSTDADTSASADG) is disordered. Residues 170 to 386 (SLNRRYTFDT…GALIRVTAFA (217 aa)) form a domain III, AAA+ region region. The ATP site is built by glycine 214, glycine 216, lysine 217, and threonine 218. Residues 387–510 (SLNKTPIDKA…TTRIRQRSKR (124 aa)) form a domain IV, binds dsDNA region.

Belongs to the DnaA family. Oligomerizes as a right-handed, spiral filament on DNA at oriC.

Its subcellular location is the cytoplasm. Plays an essential role in the initiation and regulation of chromosomal replication. ATP-DnaA binds to the origin of replication (oriC) to initiate formation of the DNA replication initiation complex once per cell cycle. Binds the DnaA box (a 9 base pair repeat at the origin) and separates the double-stranded (ds)DNA. Forms a right-handed helical filament on oriC DNA; dsDNA binds to the exterior of the filament while single-stranded (ss)DNA is stabiized in the filament's interior. The ATP-DnaA-oriC complex binds and stabilizes one strand of the AT-rich DNA unwinding element (DUE), permitting loading of DNA polymerase. After initiation quickly degrades to an ADP-DnaA complex that is not apt for DNA replication. Binds acidic phospholipids. This chain is Chromosomal replication initiator protein DnaA, found in Mycobacterium ulcerans (strain Agy99).